A 232-amino-acid chain; its full sequence is Chaperone protein LpfB (232 aa).

An N-terminal signal peptide occupies residues 1 to 23 (MNRSRLISCTALVLALIAQNSFA).

This sequence belongs to the periplasmic pilus chaperone family.

It localises to the periplasm. Functionally, required for the biogenesis of long polar fimbria; binds and interact with LpfA. In Salmonella typhimurium (strain LT2 / SGSC1412 / ATCC 700720), this protein is Chaperone protein LpfB (lpfB).